The chain runs to 474 residues: ATP synthase subunit beta 2 (474 aa).

Position 156–163 (156–163 (GGAGVGKT)) interacts with ATP.

Belongs to the ATPase alpha/beta chains family. As to quaternary structure, F-type ATPases have 2 components, CF(1) - the catalytic core - and CF(0) - the membrane proton channel. CF(1) has five subunits: alpha(3), beta(3), gamma(1), delta(1), epsilon(1). CF(0) has three main subunits: a(1), b(2) and c(9-12). The alpha and beta chains form an alternating ring which encloses part of the gamma chain. CF(1) is attached to CF(0) by a central stalk formed by the gamma and epsilon chains, while a peripheral stalk is formed by the delta and b chains.

The protein localises to the cell inner membrane. It carries out the reaction ATP + H2O + 4 H(+)(in) = ADP + phosphate + 5 H(+)(out). Functionally, produces ATP from ADP in the presence of a proton gradient across the membrane. The catalytic sites are hosted primarily by the beta subunits. The chain is ATP synthase subunit beta 2 from Shewanella frigidimarina (strain NCIMB 400).